The sequence spans 100 residues: Urease subunit gamma (100 aa).

The protein belongs to the urease gamma subunit family. Heterotrimer of UreA (gamma), UreB (beta) and UreC (alpha) subunits. Three heterotrimers associate to form the active enzyme.

It localises to the cytoplasm. It carries out the reaction urea + 2 H2O + H(+) = hydrogencarbonate + 2 NH4(+). The protein operates within nitrogen metabolism; urea degradation; CO(2) and NH(3) from urea (urease route): step 1/1. The sequence is that of Urease subunit gamma from Prochlorococcus marinus (strain NATL2A).